The chain runs to 370 residues: DNA replication and repair protein RecF (370 aa).

30–37 (GPNGSGKT) contacts ATP.

It belongs to the RecF family.

Its subcellular location is the cytoplasm. In terms of biological role, the RecF protein is involved in DNA metabolism; it is required for DNA replication and normal SOS inducibility. RecF binds preferentially to single-stranded, linear DNA. It also seems to bind ATP. The protein is DNA replication and repair protein RecF of Prosthecochloris aestuarii (strain DSM 271 / SK 413).